The sequence spans 149 residues: Transcription factor Atoh7 (149 aa).

The 53-residue stretch at 41–93 (RRRLAANARERRRMQGLNTAFDRLRRVVPQWGQDKKLSKYETLQMALSYIIAL) folds into the bHLH domain.

As to quaternary structure, forms a heterodimer with TCF3 isoform E47; interaction may be required for DNA-binding in certain situations. In terms of tissue distribution, expressed in retinal ganglion cells. Expressed in the cerebellum, trapezoid body, ventral nucleus of the lateral lamniscus and in areas of the auditory hindbrain such as the cochlear nucleus, lateral superior olive and medial nucleus of the trapezoid body. Expressed in the modiolar nerve root and in the cochlear in a small group of bushy neurons within the acoustic nerve. Expressed weakly in the sensory epithelia of the saccule and utricle.

It localises to the nucleus. Its subcellular location is the perikaryon. The protein localises to the cell projection. It is found in the axon. Functionally, transcription factor that binds to DNA at the consensus sequence 5'-CAG[GC]TG-3'. Dimerization with TCF3 isoform E47 may be required in certain situations. Binds to gene promoters and enhancer elements, and thereby regulates a transcriptional program of retinal ganglion cell (RGC) determinant genes. Although the exact mechanism is not certain, retinal transcription regulation by ATOH7 has a role in RGC determination and survival, photoreceptor population development, targeting of RGC axons to the optic nerve and development of the retino-hypothalamic tract. Binds to its own promoter and enhancer sequences, suggesting autoregulation of ATOH7 transcription. Required for retinal circadian rhythm photoentrainment. Plays a role in brainstem auditory signaling and binaural processing. In Mus musculus (Mouse), this protein is Transcription factor Atoh7.